A 397-amino-acid chain; its full sequence is Flavohemoprotein A (397 aa).

The 136-residue stretch at 2–137 (SLSQQSISII…IAQAFIDAEA (136 aa)) folds into the Globin domain. Position 84 (His-84) interacts with heme b. Residues Tyr-94 and Glu-136 each act as charge relay system in the active site. Residues 150–397 (WRDTREFIVD…YEIFGPLTNV (248 aa)) are reductase. The region spanning 151–266 (RDTREFIVDR…SPPAGDYVVD (116 aa)) is the FAD-binding FR-type domain. FAD-binding positions include Tyr-189 and 208–211 (RHYS). Position 279–284 (279–284 (GVGITP)) interacts with NADP(+). Residue 390-393 (IFGP) participates in FAD binding.

This sequence belongs to the globin family. Two-domain flavohemoproteins subfamily. In the C-terminal section; belongs to the flavoprotein pyridine nucleotide cytochrome reductase family. Requires FAD as cofactor. Heme b is required as a cofactor.

The protein localises to the cytoplasm. It carries out the reaction 2 nitric oxide + NADPH + 2 O2 = 2 nitrate + NADP(+) + H(+). The catalysed reaction is 2 nitric oxide + NADH + 2 O2 = 2 nitrate + NAD(+) + H(+). Is involved in NO detoxification in an aerobic process, termed nitric oxide dioxygenase (NOD) reaction that utilizes O(2) and NAD(P)H to convert NO to nitrate, which protects the cell from various noxious nitrogen compounds. Therefore, plays a central role in the inducible response to nitrosative stress. Its function is as follows. In the presence of oxygen and NADH, it has NADH oxidase activity, which leads to the generation of superoxide and H(2)O(2). Under anaerobic conditions, it also exhibits nitric oxide reductase and FAD reductase activities. However, all these reactions are much lower than NOD activity. This is Flavohemoprotein A (fhbA) from Dictyostelium discoideum (Social amoeba).